The chain runs to 356 residues: DNA integrity scanning protein DisA (356 aa).

Positions 7-147 (NKNMLYALKM…EKYVVEDISK (141 aa)) constitute a DAC domain. Residues glycine 74, leucine 92, and 105–109 (TRHRT) each bind ATP.

This sequence belongs to the DisA family. In terms of assembly, homooctamer. Mg(2+) is required as a cofactor.

The catalysed reaction is 2 ATP = 3',3'-c-di-AMP + 2 diphosphate. Its function is as follows. Participates in a DNA-damage check-point that is active prior to asymmetric division when DNA is damaged. DisA forms globular foci that rapidly scan along the chromosomes during sporulation, searching for lesions. When a lesion is present, DisA pauses at the lesion site. This triggers a cellular response that culminates in a temporary block in sporulation initiation. Functionally, also has diadenylate cyclase activity, catalyzing the condensation of 2 ATP molecules into cyclic di-AMP (c-di-AMP). c-di-AMP acts as a signaling molecule that couples DNA integrity with progression of sporulation. The rise in c-di-AMP level generated by DisA while scanning the chromosome, operates as a positive signal that advances sporulation; upon encountering a lesion, the DisA focus arrests at the damaged site and halts c-di-AMP synthesis. The protein is DNA integrity scanning protein DisA of Clostridioides difficile (strain 630) (Peptoclostridium difficile).